The sequence spans 1762 residues: ADAMTS-like protein 1 (1762 aa).

Residues 1–28 form the signal peptide; that stretch reads MECCRRATPGTLLLFLAFLLLSSRTARS. A TSP type-1 1 domain is found at 33-82; that stretch reads DGLWDAWGPWSECSRTCGGGASYSLRRCLSSKSCEGRNIRYRTCSNVDCP. C-linked (Man) tryptophan glycans are attached at residues Trp39 and Trp42. Disulfide bonds link Cys45–Cys76, Cys49–Cys81, and Cys60–Cys66. O-linked (Fuc...) threonine glycosylation is present at Thr48. A glycan (N-linked (GlcNAc...) asparagine) is linked at Asn251. O-linked (Fuc...) threonine glycosylation occurs at Thr312. TSP type-1 domains lie at 376–424, 436–493, 522–584, 607–665, 666–729, and 788–850; these read PLPR…MYTP, DCPK…TPCY, EEPS…GPCS, ELYD…NLDP, CPAR…FNCP, and CPSE…ATCA. O-linked (Fuc...) serine glycosylation occurs at Ser391. Residue Thr451 is glycosylated (O-linked (Fuc...) threonine). Intrachain disulfides connect Cys534/Cys578, Cys538/Cys583, and Cys549/Cys567. 7 disulfide bridges follow: Cys678–Cys723, Cys682–Cys728, Cys693–Cys712, Cys800–Cys844, Cys804–Cys849, Cys815–Cys832, and Cys899–Cys947. The Ig-like C2-type 1 domain maps to 861 to 963; it reads PHIAAARKVY…EHFVIKLIGG (103 aa). The segment at 1120–1164 is disordered; the sequence is LKPSERRTSPVTLSPHKHVSGFSSSLRTSSTGDAGGGSRRPHRKP. Residues 1139 to 1151 show a composition bias toward low complexity; that stretch reads SGFSSSLRTSSTG. Ig-like C2-type domains lie at 1164–1266, 1286–1369, and 1395–1485; these read PTIL…IAVT, PAVT…TQLL, and PSVL…ASLV. 3 disulfide bridges follow: Cys1202-Cys1250, Cys1308-Cys1353, and Cys1418-Cys1469. TSP type-1 domains follow at residues 1545–1608 and 1666–1726; these read CPSR…QLCV and CSVH…TPCE. A PLAC domain is found at 1726–1762; the sequence is ENMECRDTTRYCEKVKQLKLCQLSQFKSRCCGTCGKA.

As to quaternary structure, monomer. C-, N- and O-glycosylated. O-fucosylated by POFUT2 on a serine or a threonine residue found within the consensus sequence C1-X(2)-(S/T)-C2-G of the TSP type-1 repeat domains where C1 and C2 are the first and second cysteine residue of the repeat, respectively. Fucosylated repeats can then be further glycosylated by the addition of a beta-1,3-glucose residue by the glucosyltransferase, B3GALTL. Fucosylation mediates the efficient secretion of ADAMTSL1. Can also be C-glycosylated with one or two mannose molecules on tryptophan residues within the consensus sequence W-X-X-W of the TPRs, and N-glycosylated. These other glycosylations can also facilitate secretion. Post-translationally, disulfide bonds are present. As to expression, expressed primarily in adult skeletal muscle.

It is found in the secreted. The protein localises to the extracellular space. It localises to the extracellular matrix. This chain is ADAMTS-like protein 1 (ADAMTSL1), found in Homo sapiens (Human).